The chain runs to 124 residues: Large ribosomal subunit protein bL12 (124 aa).

The protein belongs to the bacterial ribosomal protein bL12 family. As to quaternary structure, homodimer. Part of the ribosomal stalk of the 50S ribosomal subunit. Forms a multimeric L10(L12)X complex, where L10 forms an elongated spine to which 2 to 4 L12 dimers bind in a sequential fashion. Binds GTP-bound translation factors.

Its function is as follows. Forms part of the ribosomal stalk which helps the ribosome interact with GTP-bound translation factors. Is thus essential for accurate translation. The chain is Large ribosomal subunit protein bL12 from Allorhizobium ampelinum (strain ATCC BAA-846 / DSM 112012 / S4) (Agrobacterium vitis (strain S4)).